The following is a 517-amino-acid chain: Serine O-succinyltransferase (517 aa).

The transit peptide at 1–46 (MSPLNGVARSLPRPFQAVARRPFRVAQPAVACPSNRRSFNHSRSLR) directs the protein to the mitochondrion. A disordered region spans residues 34 to 66 (SNRRSFNHSRSLRSTGSQSPAPSPRDSSNPALS). Residues 45-64 (LRSTGSQSPAPSPRDSSNPA) are compositionally biased toward polar residues. Positions 134–386 (NVILLHTGLS…LTQQLATKKQ (253 aa)) constitute an AB hydrolase-1 domain. Residues 141–144 (GLSA) are important for substrate specificity. Residue S238 is the Nucleophile of the active site. R307 is a substrate binding site. The tract at residues 413-436 (QPYQEQPSASTSAEQSASASETGS) is disordered. Positions 416-436 (QEQPSASTSAEQSASASETGS) are enriched in low complexity. Catalysis depends on residues D461 and H498. D499 serves as a coordination point for substrate.

Belongs to the AB hydrolase superfamily. MetX family.

It localises to the mitochondrion. The catalysed reaction is succinyl-CoA + L-serine = O-succinyl-L-serine + CoA. The protein operates within amino-acid biosynthesis; L-cysteine biosynthesis; L-cysteine from L-serine: step 1/2. In terms of biological role, transfers a succinyl group from succinyl-CoA to L-serine, forming succinyl-L-serine. Also has weak serine acetyl transferase activity and homoserine succinyl transferase activity. This chain is Serine O-succinyltransferase, found in Emericella nidulans (Aspergillus nidulans).